A 268-amino-acid chain; its full sequence is 4-hydroxy-tetrahydrodipicolinate reductase (268 aa).

Position 8–13 (8–13) interacts with NAD(+); sequence GAAGRM. Arg-36 provides a ligand contact to NADP(+). Residues 99 to 101 and 123 to 126 each bind NAD(+); these read GTT and AANF. The active-site Proton donor/acceptor is His-156. His-157 serves as a coordination point for (S)-2,3,4,5-tetrahydrodipicolinate. The active-site Proton donor is Lys-160. Position 166–167 (166–167) interacts with (S)-2,3,4,5-tetrahydrodipicolinate; it reads GT.

This sequence belongs to the DapB family.

It localises to the cytoplasm. The catalysed reaction is (S)-2,3,4,5-tetrahydrodipicolinate + NAD(+) + H2O = (2S,4S)-4-hydroxy-2,3,4,5-tetrahydrodipicolinate + NADH + H(+). It carries out the reaction (S)-2,3,4,5-tetrahydrodipicolinate + NADP(+) + H2O = (2S,4S)-4-hydroxy-2,3,4,5-tetrahydrodipicolinate + NADPH + H(+). It functions in the pathway amino-acid biosynthesis; L-lysine biosynthesis via DAP pathway; (S)-tetrahydrodipicolinate from L-aspartate: step 4/4. Catalyzes the conversion of 4-hydroxy-tetrahydrodipicolinate (HTPA) to tetrahydrodipicolinate. The chain is 4-hydroxy-tetrahydrodipicolinate reductase from Pseudomonas fluorescens (strain SBW25).